The sequence spans 205 residues: Cytochrome c oxidase subunit 3 (205 aa).

A run of 5 helical transmembrane segments spans residues 29-49, 73-93, 104-124, 144-164, and 184-204; these read TIVFLSQELMFFAGLFAMYFV, LAITVILVSSSVTCQFGVFAA, WFLITIILGSIFVIGQAYEYF, ITTGFHAAHVIAGVIAFVVVL, and SYYWHFVDVVWIGLFITIYFI.

The protein belongs to the cytochrome c oxidase subunit 3 family. Associates with subunits I, II and IV to form cytochrome c oxidase.

The protein localises to the cell membrane. It catalyses the reaction 4 Fe(II)-[cytochrome c] + O2 + 8 H(+)(in) = 4 Fe(III)-[cytochrome c] + 2 H2O + 4 H(+)(out). The polypeptide is Cytochrome c oxidase subunit 3 (ctaE) (Corynebacterium efficiens (strain DSM 44549 / YS-314 / AJ 12310 / JCM 11189 / NBRC 100395)).